The sequence spans 78 residues: Acyl carrier protein (78 aa).

The Carrier domain occupies 1 to 76; sequence MALFEDIQAV…DVVKYIEDNK (76 aa). Ser36 is modified (O-(pantetheine 4'-phosphoryl)serine).

This sequence belongs to the acyl carrier protein (ACP) family. Post-translationally, 4'-phosphopantetheine is transferred from CoA to a specific serine of apo-ACP by AcpS. This modification is essential for activity because fatty acids are bound in thioester linkage to the sulfhydryl of the prosthetic group.

It localises to the cytoplasm. Its pathway is lipid metabolism; fatty acid biosynthesis. Its function is as follows. Carrier of the growing fatty acid chain in fatty acid biosynthesis. This is Acyl carrier protein from Helicobacter acinonychis (strain Sheeba).